The following is a 245-amino-acid chain: DNA repair protein RecO (245 aa).

This sequence belongs to the RecO family.

Its function is as follows. Involved in DNA repair and RecF pathway recombination. The chain is DNA repair protein RecO from Bartonella bacilliformis (strain ATCC 35685 / KC583 / Herrer 020/F12,63).